The sequence spans 427 residues: DNA topoisomerase 6 subunit A (427 aa).

In terms of domain architecture, Topo IIA-type catalytic spans 76–209 (LSLSSVQTEI…LNVIAAEKGV (134 aa)). Y170 functions as the O-(5'-phospho-DNA)-tyrosine intermediate in the catalytic mechanism. 2 residues coordinate Mg(2+): E256 and D308.

Belongs to the TOP6A family. Homodimer. Heterotetramer of two TOP6A and two TOP6B subunits. Interacts with BIN4 and RHL1. It depends on Mg(2+) as a cofactor. Highly expressed in leaves, stems, flowers and seedlings.

It localises to the nucleus. The enzyme catalyses ATP-dependent breakage, passage and rejoining of double-stranded DNA.. Functionally, component of the DNA topoisomerase VI involved in chromatin organization and progression of endoreduplication cycles. Relaxes both positive and negative superturns and exhibits a strong decatenase activity. Involved in cell-elongation processes. This Arabidopsis thaliana (Mouse-ear cress) protein is DNA topoisomerase 6 subunit A.